We begin with the raw amino-acid sequence, 591 residues long: Aspartate--tRNA(Asp/Asn) ligase (591 aa).

Glu-170 is an L-aspartate binding site. The aspartate stretch occupies residues 194 to 197 (QLFK). Arg-216 provides a ligand contact to L-aspartate. ATP-binding positions include 216-218 (RDE) and Gln-225. His-448 is an L-aspartate binding site. ATP is bound at residue Glu-482. Residue Arg-489 participates in L-aspartate binding. Residue 534–537 (GWDR) participates in ATP binding. Positions 559–591 (GGVDPLTDAPAPITEQQRKESGIDVKPEPSKPH) are disordered. Positions 574-591 (QQRKESGIDVKPEPSKPH) are enriched in basic and acidic residues.

The protein belongs to the class-II aminoacyl-tRNA synthetase family. Type 1 subfamily. In terms of assembly, homodimer.

Its subcellular location is the cytoplasm. It catalyses the reaction tRNA(Asx) + L-aspartate + ATP = L-aspartyl-tRNA(Asx) + AMP + diphosphate. Its function is as follows. Aspartyl-tRNA synthetase with relaxed tRNA specificity since it is able to aspartylate not only its cognate tRNA(Asp) but also tRNA(Asn). Reaction proceeds in two steps: L-aspartate is first activated by ATP to form Asp-AMP and then transferred to the acceptor end of tRNA(Asp/Asn). The chain is Aspartate--tRNA(Asp/Asn) ligase from Mycobacterium avium (strain 104).